Reading from the N-terminus, the 182-residue chain is MSKKIMATQKVVIASLNPAKINAVKSAFQSAFPQQVFEFVGISVPSEVADQPMTNEETHRGALNRVKNAKLEMPTADFYVGLEAGIEGNVTFAWMVIESDTHRGESRSASLMLPPEVLAQLADANELGDVMDKVFGTENIKQKGGAISLLTQNQLTRSSVYHQALILALIPFTNPDHFPANL.

Belongs to the YjjX NTPase family. Homodimer. Mg(2+) serves as cofactor. The cofactor is Mn(2+).

It carries out the reaction XTP + H2O = XDP + phosphate + H(+). The enzyme catalyses ITP + H2O = IDP + phosphate + H(+). Its function is as follows. Phosphatase that hydrolyzes non-canonical purine nucleotides such as XTP and ITP to their respective diphosphate derivatives. Probably excludes non-canonical purines from DNA/RNA precursor pool, thus preventing their incorporation into DNA/RNA and avoiding chromosomal lesions. This is Inosine/xanthosine triphosphatase from Vibrio parahaemolyticus serotype O3:K6 (strain RIMD 2210633).